The primary structure comprises 189 residues: GMP synthase [glutamine-hydrolyzing] subunit A (189 aa).

The Glutamine amidotransferase type-1 domain occupies 5-189; sequence KIIVINNYGQ…MNFFKVCEDY (185 aa). Cys-79 acts as the Nucleophile in catalysis. Catalysis depends on residues His-166 and Glu-168.

Heterodimer composed of a glutamine amidotransferase subunit (A) and a GMP-binding subunit (B).

The enzyme catalyses XMP + L-glutamine + ATP + H2O = GMP + L-glutamate + AMP + diphosphate + 2 H(+). The protein operates within purine metabolism; GMP biosynthesis; GMP from XMP (L-Gln route): step 1/1. In terms of biological role, catalyzes the synthesis of GMP from XMP. The sequence is that of GMP synthase [glutamine-hydrolyzing] subunit A from Methanococcoides burtonii (strain DSM 6242 / NBRC 107633 / OCM 468 / ACE-M).